The primary structure comprises 380 residues: Cytochrome b (380 aa).

Helical transmembrane passes span 33–53, 77–98, 113–133, and 178–198; these read FGSLLGLCLAAQILTGLFLAM, WLIRSMHANGASFFFICIYLHI, WNIGVILLLLVMMTAFVGYVL, and FFAFHFLFPFVIAAMTMIHLI. Heme b is bound by residues His-83 and His-97. Heme b contacts are provided by His-182 and His-196. Residue His-201 coordinates a ubiquinone. 4 consecutive transmembrane segments (helical) span residues 226 to 246, 288 to 308, 320 to 340, and 347 to 367; these read YKDLLGFAILLIALITLALFS, LGGVLALLFSILILMLVPVLH, FSQFLFWLLVANVAILTWIGG, and FIIIGQIASFLYFFIFLILVP.

It belongs to the cytochrome b family. The cytochrome bc1 complex contains 3 respiratory subunits (MT-CYB, CYC1 and UQCRFS1), 2 core proteins (UQCRC1 and UQCRC2) and probably 6 low-molecular weight proteins. Requires heme b as cofactor.

It is found in the mitochondrion inner membrane. Its function is as follows. Component of the ubiquinol-cytochrome c reductase complex (complex III or cytochrome b-c1 complex) that is part of the mitochondrial respiratory chain. The b-c1 complex mediates electron transfer from ubiquinol to cytochrome c. Contributes to the generation of a proton gradient across the mitochondrial membrane that is then used for ATP synthesis. This is Cytochrome b (mt-cyb) from Astronotus ocellatus (Oscar).